Consider the following 430-residue polypeptide: Histidine--tRNA ligase (430 aa).

This sequence belongs to the class-II aminoacyl-tRNA synthetase family. As to quaternary structure, homodimer.

It localises to the cytoplasm. The enzyme catalyses tRNA(His) + L-histidine + ATP = L-histidyl-tRNA(His) + AMP + diphosphate + H(+). The sequence is that of Histidine--tRNA ligase from Chlamydia abortus (strain DSM 27085 / S26/3) (Chlamydophila abortus).